A 181-amino-acid polypeptide reads, in one-letter code: Large ribosomal subunit protein uL5 (181 aa).

Belongs to the universal ribosomal protein uL5 family. Part of the 50S ribosomal subunit; part of the 5S rRNA/L5/L18/L25 subcomplex. Contacts the 5S rRNA and the P site tRNA. Forms a bridge to the 30S subunit in the 70S ribosome.

This is one of the proteins that bind and probably mediate the attachment of the 5S RNA into the large ribosomal subunit, where it forms part of the central protuberance. In the 70S ribosome it contacts protein S13 of the 30S subunit (bridge B1b), connecting the 2 subunits; this bridge is implicated in subunit movement. Contacts the P site tRNA; the 5S rRNA and some of its associated proteins might help stabilize positioning of ribosome-bound tRNAs. This chain is Large ribosomal subunit protein uL5, found in Baumannia cicadellinicola subsp. Homalodisca coagulata.